The sequence spans 319 residues: tRNA uridine(34) hydroxylase (319 aa).

The Rhodanese domain occupies 127-221; it reads KQEDTVIIDA…YGKDPEVQGE (95 aa). Catalysis depends on Cys181, which acts as the Cysteine persulfide intermediate.

Belongs to the TrhO family.

The enzyme catalyses uridine(34) in tRNA + AH2 + O2 = 5-hydroxyuridine(34) in tRNA + A + H2O. Catalyzes oxygen-dependent 5-hydroxyuridine (ho5U) modification at position 34 in tRNAs. The polypeptide is tRNA uridine(34) hydroxylase (Bacillus cereus (strain AH187)).